Consider the following 488-residue polypeptide: NADH-ubiquinone oxidoreductase chain 2 (488 aa).

Transmembrane regions (helical) follow at residues 4 to 24 (LFLA…LLIH), 45 to 65 (WLGL…APLL), 84 to 104 (FCQI…FDFF), 111 to 131 (AFEF…MISA), 134 to 154 (LIAM…LAAS), 168 to 188 (YLIL…MIYG), 215 to 235 (IFMG…AVPF), 252 to 272 (AFLS…VFIY), 282 to 302 (IFFF…MAQT), 308 to 328 (LAYS…CGTI), 334 to 354 (LLIG…IVLA), 375 to 395 (ILAI…PLAG), 400 to 420 (FYLF…VGVV), and 456 to 476 (LLLA…SPLF).

The protein belongs to the complex I subunit 2 family.

The protein resides in the mitochondrion inner membrane. It carries out the reaction a ubiquinone + NADH + 5 H(+)(in) = a ubiquinol + NAD(+) + 4 H(+)(out). In terms of biological role, core subunit of the mitochondrial membrane respiratory chain NADH dehydrogenase (Complex I) that is believed to belong to the minimal assembly required for catalysis. Complex I functions in the transfer of electrons from NADH to the respiratory chain. The immediate electron acceptor for the enzyme is believed to be ubiquinone. This Oenothera berteroana (Bertero's evening primrose) protein is NADH-ubiquinone oxidoreductase chain 2 (ND2).